The following is a 126-amino-acid chain: Small ribosomal subunit protein uS11 (126 aa).

Belongs to the universal ribosomal protein uS11 family. In terms of assembly, part of the 30S ribosomal subunit. Interacts with proteins S7 and S18. Binds to IF-3.

In terms of biological role, located on the platform of the 30S subunit, it bridges several disparate RNA helices of the 16S rRNA. Forms part of the Shine-Dalgarno cleft in the 70S ribosome. The chain is Small ribosomal subunit protein uS11 from Treponema pallidum (strain Nichols).